The following is a 126-amino-acid chain: MIKSLFAVIIGGSVGCTLRWLLSTRFNSLFPNLPPGTLVVNLLAGLIIGTALAYFLRQPHLDPFWKLMITTGLCGGLSTFSTFSVEVFALLQAGNYIWALTSVLVHVIGSLIMTALGFFIITILFA.

The next 2 membrane-spanning stretches (helical) occupy residues 2 to 22 and 36 to 56; these read IKSL…RWLL and GTLV…AYFL. Na(+) is bound by residues glycine 75 and serine 78. 2 consecutive transmembrane segments (helical) span residues 80-100 and 105-125; these read FSTF…IWAL and VHVI…TILF.

It belongs to the fluoride channel Fluc/FEX (TC 1.A.43) family. Homodimer.

Its subcellular location is the cell inner membrane. It catalyses the reaction fluoride(in) = fluoride(out). Na(+) is not transported, but it plays an essential structural role and its presence is essential for fluoride channel function. Functionally, fluoride-specific ion channel. Important for reducing fluoride concentration in the cell, thus reducing its toxicity. Is highly specific for fluoride ions and cannot transport chloride ions. This is Fluoride-specific ion channel FluC from Escherichia coli O1:K1 / APEC.